The primary structure comprises 449 residues: UDP-N-acetylmuramate--L-alanine ligase (449 aa).

ATP is bound at residue 121–127 (GAHGKSS).

The protein belongs to the MurCDEF family.

It is found in the cytoplasm. The catalysed reaction is UDP-N-acetyl-alpha-D-muramate + L-alanine + ATP = UDP-N-acetyl-alpha-D-muramoyl-L-alanine + ADP + phosphate + H(+). It functions in the pathway cell wall biogenesis; peptidoglycan biosynthesis. Cell wall formation. The protein is UDP-N-acetylmuramate--L-alanine ligase of Helicobacter pylori (strain P12).